We begin with the raw amino-acid sequence, 472 residues long: Putative ankyrin repeat protein L675 (472 aa).

ANK repeat units follow at residues 125-156, 187-216, 265-295, 297-323, 325-351, 352-381, 382-411, and 413-440; these read YKANRFYLGEKFDLGDVEVVKFFIKKGTDIHL, DNFKVLAKICRDGNLELLRLLELNGFNETI, YKTKVLLMAIANNHAELVQYLLTQNPSDKDI, HAMLYAVTTANASLLDYTLKNGGNIHY, NDQALILAVRFNHISMVRKLICLGMDS, NNVFALTMAAENNHQDIVQHLINRGADVNA, NNRSALIAAVKNGHLKIVQMFVNNGADIKI, and DTVIKTACKNGHNNIVKYLLGKGVSCDD.

This Acanthamoeba polyphaga (Amoeba) protein is Putative ankyrin repeat protein L675.